Reading from the N-terminus, the 129-residue chain is Mitochondrial pyruvate carrier 2 (129 aa).

Over 2 to 22 the chain is Mitochondrial matrix; the sequence is STSSVRFAFRRFWQSETGPKT. A helical transmembrane segment spans residues 23-39; sequence VHFWAPTLKWGLVFAGF. At 40–54 the chain is on the mitochondrial intermembrane side; that stretch reads SDMKRPVEKISGAQN. The helical transmembrane segment at 55-71 threads the bilayer; it reads LSLLSTALIWTRWSFVI. The Mitochondrial matrix segment spans residues 72–74; that stretch reads KPR. The helical transmembrane segment at 75–91 threads the bilayer; the sequence is NILLASVNSFLCLTAGY. The Mitochondrial intermembrane portion of the chain corresponds to 92–129; it reads QLGRIANYRIRNGDSISQLCSYILSGADESKKEITTGR.

The protein belongs to the mitochondrial pyruvate carrier (MPC) (TC 2.A.105) family. The functional 150 kDa pyruvate import complex is a heteromer of MPC1 and either MPC2 or MPC3.

The protein resides in the mitochondrion. Its subcellular location is the mitochondrion inner membrane. It carries out the reaction pyruvate(out) + H(+)(out) = pyruvate(in) + H(+)(in). Functionally, mediates the uptake of pyruvate into mitochondria. In Saccharomyces cerevisiae (strain ATCC 204508 / S288c) (Baker's yeast), this protein is Mitochondrial pyruvate carrier 2.